The primary structure comprises 1440 residues: Gag-Pro-Pol polyprotein (1440 aa).

Gly-2 is lipidated: N-myristoyl glycine; by host. The tract at residues 93 to 117 (AREAPPSAPPADDPQKPPPYPEHAQ) is disordered. Positions 98 to 101 (PSAP) match the PTAP/PSAP motif motif. A compositionally biased stretch (pro residues) spans 98 to 113 (PSAPPADDPQKPPPYP). Residues 109-112 (PPPY) carry the PPXY motif motif. CCHC-type zinc fingers lie at residues 349–366 (QPCF…DCKQ) and 372–389 (GPCP…DCPQ). The 79-residue stretch at 457 to 535 (VQALLDTGAD…DQWTILGRDA (79 aa)) folds into the Peptidase A2 domain. Asp-462 functions as the For protease activity; shared with dimeric partner in the catalytic mechanism. One can recognise a Reverse transcriptase domain in the interval 593–783 (LEAKHIEPYQ…GSIHFLGQVI (191 aa)). Mg(2+)-binding residues include Asp-659, Asp-734, Asp-735, Asp-1019, Glu-1052, Asp-1074, Asp-1135, Asp-1208, and Asp-1265. The 134-residue stretch at 1010-1143 (IDHAPCLFSD…TDALMLAPLL (134 aa)) folds into the RNase H type-1 domain. The region spanning 1197–1366 (RGHAPNVIWQ…PSIPENTLPP (170 aa)) is the Integrase catalytic domain. Residues 1371–1420 (KWYYYKIPGLTNPRWSGPVQSLKEAAGAALIPVGGSHLWIPWRLLKRGIC) constitute a DNA-binding region (integrase-type).

In terms of assembly, interacts with human TSG101. This interaction is essential for budding and release of viral particles. It depends on Mg(2+) as a cofactor. Post-translationally, specific enzymatic cleavages by the viral protease yield mature proteins. The polyprotein is cleaved during and after budding, this process is termed maturation. The protease is autoproteolytically processed at its N- and C-termini.

Its subcellular location is the virion. The catalysed reaction is Endonucleolytic cleavage to 5'-phosphomonoester.. The enzyme catalyses DNA(n) + a 2'-deoxyribonucleoside 5'-triphosphate = DNA(n+1) + diphosphate. Functionally, matrix protein p19 targets Gag, Gag-Pro and Gag-Pro-Pol polyproteins to the plasma membrane via a multipartite membrane binding signal, that includes its myristoylated N-terminus. Also mediates nuclear localization of the preintegration complex. Its function is as follows. Capsid protein p24 forms the conical core of the virus that encapsulates the genomic RNA-nucleocapsid complex. Nucleocapsid protein p15 is involved in the packaging and encapsidation of two copies of the genome. In terms of biological role, the aspartyl protease mediates proteolytic cleavages of Gag, Gag-Pro and Gag-Pro-Pol polyproteins during or shortly after the release of the virion from the plasma membrane. Cleavages take place as an ordered, step-wise cascade to yield mature proteins. This process is called maturation. Displays maximal activity during the budding process just prior to particle release from the cell. Hydrolyzes host EIF4GI in order to shut off the capped cellular mRNA translation. The resulting inhibition of cellular protein synthesis serves to ensure maximal viral gene expression and to evade host immune response. Functionally, reverse transcriptase (RT) is a multifunctional enzyme that converts the viral RNA genome into dsDNA in the cytoplasm, shortly after virus entry into the cell. This enzyme displays a DNA polymerase activity that can copy either DNA or RNA templates, and a ribonuclease H (RNase H) activity that cleaves the RNA strand of RNA-DNA heteroduplexes in a partially processive 3' to 5'-endonucleasic mode. Conversion of viral genomic RNA into dsDNA requires many steps. A tRNA-Pro binds to the primer-binding site (PBS) situated at the 5'-end of the viral RNA. RT uses the 3' end of the tRNA primer to perform a short round of RNA-dependent minus-strand DNA synthesis. The reading proceeds through the U5 region and ends after the repeated (R) region which is present at both ends of viral RNA. The portion of the RNA-DNA heteroduplex is digested by the RNase H, resulting in a ssDNA product attached to the tRNA primer. This ssDNA/tRNA hybridizes with the identical R region situated at the 3' end of viral RNA. This template exchange, known as minus-strand DNA strong stop transfer, can be either intra- or intermolecular. RT uses the 3' end of this newly synthesized short ssDNA to perform the RNA-dependent minus-strand DNA synthesis of the whole template. RNase H digests the RNA template except for a polypurine tract (PPT) situated at the 5' end of the genome. It is not clear if both polymerase and RNase H activities are simultaneous. RNase H probably can proceed both in a polymerase-dependent (RNA cut into small fragments by the same RT performing DNA synthesis) and a polymerase-independent mode (cleavage of remaining RNA fragments by free RTs). Secondly, RT performs DNA-directed plus-strand DNA synthesis using the PPT that has not been removed by RNase H as primer. PPT and tRNA primers are then removed by RNase H. The 3' and 5' ssDNA PBS regions hybridize to form a circular dsDNA intermediate. Strand displacement synthesis by RT to the PBS and PPT ends produces a blunt ended, linear dsDNA copy of the viral genome that includes long terminal repeats (LTRs) at both ends. Its function is as follows. Integrase catalyzes viral DNA integration into the host chromosome, by performing a series of DNA cutting and joining reactions. This enzyme activity takes place after virion entry into a cell and reverse transcription of the RNA genome in dsDNA. The first step in the integration process is 3' processing. This step requires a complex comprising the viral genome, matrix protein, and integrase. This complex is called the pre-integration complex (PIC). The integrase protein removes 2 nucleotides from each 3' end of the viral DNA, leaving recessed dinucleotides OH's at the 3' ends. In the second step, the PIC access cell chromosomes during cell division. The third step, termed strand transfer, the integrase protein joins the previously processed 3' ends to the 5'-ends of strands of target cellular DNA at the site of integration. The 5'-ends are produced by integrase-catalyzed staggered cuts, 5 bp apart. A Y-shaped, gapped, recombination intermediate results, with the 5'-ends of the viral DNA strands and the 3' ends of target DNA strands remaining unjoined, flanking a gap of 5 bp. The last step is viral DNA integration into host chromosome. This involves host DNA repair synthesis in which the 5 bp gaps between the unjoined strands (see above) are filled in and then ligated. The polypeptide is Gag-Pro-Pol polyprotein (gag-pro-pol) (Human T-cell leukemia virus 3 (strain Pyl43) (HTLV-3)).